We begin with the raw amino-acid sequence, 803 residues long: Ubiquitin carboxyl-terminal hydrolase 45 (803 aa).

The segment at 1–34 (MRLKDPFSLKTADMTKRSNKPKKPRDEDSSDEVG) is disordered. Residues 36–153 (LTCQHVSRAV…QTLDFLQKQS (118 aa)) form a UBP-type zinc finger. Cys-38, His-40, Cys-62, Cys-65, Cys-85, Cys-88, Cys-93, His-100, His-104, His-113, Cys-126, and Cys-129 together coordinate Zn(2+). Positions 192–802 (KGINNLGNTC…QAYLLFYEEL (611 aa)) constitute a USP domain. Cys-201 functions as the Nucleophile in the catalytic mechanism. The segment at 394 to 554 (PTNPARLGKS…LPSIRPQQGG (161 aa)) is disordered. Basic and acidic residues predominate over residues 403–417 (SGREQDSLTSHDDSL). Composition is skewed to polar residues over residues 419–440 (AHSQ…SRHS) and 469–480 (SYRTDTMGSQSD). Low complexity predominate over residues 502-531 (SEWSPRIPSVSSHSSTSDKTSITTTLSTTT). Positions 532–545 (HNPSLKSNPSSTPL) are enriched in polar residues. Catalysis depends on His-739, which acts as the Proton acceptor.

This sequence belongs to the peptidase C19 family. Retina.

The protein resides in the photoreceptor inner segment. The protein localises to the cytoplasm. Its subcellular location is the nucleus. The enzyme catalyses Thiol-dependent hydrolysis of ester, thioester, amide, peptide and isopeptide bonds formed by the C-terminal Gly of ubiquitin (a 76-residue protein attached to proteins as an intracellular targeting signal).. Catalyzes the deubiquitination of SPDL1. Plays a role in the repair of UV-induced DNA damage via deubiquitination of ERCC1, promoting its recruitment to DNA damage sites. May be involved in the maintenance of photoreceptor function. May play a role in normal retinal development. The sequence is that of Ubiquitin carboxyl-terminal hydrolase 45 from Danio rerio (Zebrafish).